Here is a 416-residue protein sequence, read N- to C-terminus: S-adenosylmethionine synthase (416 aa).

H14 provides a ligand contact to ATP. Position 16 (D16) interacts with Mg(2+). E42 contributes to the K(+) binding site. Residues E55 and Q98 each contribute to the L-methionine site. The segment at 98-108 (QSPDIARGVDT) is flexible loop. ATP is bound by residues 173–175 (DGK), 249–250 (KF), D258, 264–265 (RK), A281, and K285. Residue D258 participates in L-methionine binding. An L-methionine-binding site is contributed by K289.

Belongs to the AdoMet synthase family. In terms of assembly, homotetramer; dimer of dimers. Requires Mg(2+) as cofactor. K(+) serves as cofactor.

The protein localises to the cytoplasm. It catalyses the reaction L-methionine + ATP + H2O = S-adenosyl-L-methionine + phosphate + diphosphate. Its pathway is amino-acid biosynthesis; S-adenosyl-L-methionine biosynthesis; S-adenosyl-L-methionine from L-methionine: step 1/1. In terms of biological role, catalyzes the formation of S-adenosylmethionine (AdoMet) from methionine and ATP. The overall synthetic reaction is composed of two sequential steps, AdoMet formation and the subsequent tripolyphosphate hydrolysis which occurs prior to release of AdoMet from the enzyme. This chain is S-adenosylmethionine synthase, found in Thermosynechococcus vestitus (strain NIES-2133 / IAM M-273 / BP-1).